A 429-amino-acid chain; its full sequence is MSSPPPAAAAAMAVDDADDDQLASMSTEDIVRATRLLDNETRVLKDELQRTNLEVESYKEKIKENQEKIKLNKQLPYLVGNIVEILEMNPEDEAEEDGANIDLDSQRKGKCVVLKTSTRQTIFLPVIGLVDPEKLKPGDLVGVNKDSYLILDTLPSEYDSRVKAMEVDEKPTEDYNDIGGLEKQIQELVEAIVLPMTHKDRFQKLGIRPPKGVLLYGPPGTGKTLMARACAAQTNATFLKLAGPQLVQMFIGDGAKLVRDAFQLAKEKSPCIIFIDEIDAIGTKRFDSEVSGDREVQRTMLELLNQLDGFSSDERIKVIAATNRADILDPALMRSGRLDRKIEFPHPSEEARARILQIHSRKMNVNPDVNFEELARSTDDFNGAQLKAVCVEAGMLALRRDATEVTHEDFNEGIIQVQAKKKSSLNYYA.

Positions 1–21 (MSSPPPAAAAAMAVDDADDDQ) are disordered. Residue 217–224 (GPPGTGKT) participates in ATP binding.

The protein belongs to the AAA ATPase family.

The protein localises to the cytoplasm. It localises to the nucleus. Its function is as follows. The 26S proteasome is involved in the ATP-dependent degradation of ubiquitinated proteins. The regulatory (or ATPase) complex confers ATP dependency and substrate specificity to the 26S complex. This chain is 26S proteasome regulatory subunit 6A homolog (TBP1), found in Oryza sativa subsp. japonica (Rice).